Here is a 63-residue protein sequence, read N- to C-terminus: Cecropin (63 aa).

Positions 1–23 are cleaved as a signal peptide; the sequence is MNFYKIFVFIALILALSVSQSEA. An Arginine amide modification is found at Arg62.

Monomer. Hemolymph.

It localises to the secreted. Cecropins have lytic and antibacterial activity against several Gram-negative bacteria. In Glossina morsitans morsitans (Savannah tsetse fly), this protein is Cecropin.